An 86-amino-acid chain; its full sequence is U15-lycotoxin-Ls1g (86 aa).

A signal peptide spans 1–20 (MNSKIFAVLLLLGLLSCVLS). Positions 21–66 (DQYCPKSSITACKKMNIRNDCCKDDDCTGGSWCCATPCGNFCKYPA) constitute a WAP domain. 5 disulfide bridges follow: cysteine 24–cysteine 54, cysteine 32–cysteine 58, cysteine 41–cysteine 53, cysteine 42–cysteine 80, and cysteine 47–cysteine 62.

It belongs to the venom protein 11 family. 01 (wap-1) subfamily. Contains 5 disulfide bonds. As to expression, expressed by the venom gland.

It is found in the secreted. Its function is as follows. Has antibacterial activity. The sequence is that of U15-lycotoxin-Ls1g from Lycosa singoriensis (Wolf spider).